The chain runs to 142 residues: Hemoglobin subunit alpha-A (142 aa).

The Globin domain occupies valine 2–arginine 142. Histidine 59 contributes to the O2 binding site. Residue histidine 88 participates in heme b binding.

Belongs to the globin family. In terms of assembly, heterotetramer of two alpha chains and two beta chains. Red blood cells.

In terms of biological role, involved in oxygen transport from the lung to the various peripheral tissues. The sequence is that of Hemoglobin subunit alpha-A (HBAA) from Anser indicus (Bar-headed goose).